A 339-amino-acid chain; its full sequence is NADH-quinone oxidoreductase subunit H (339 aa).

Transmembrane regions (helical) follow at residues 9–29 (IFPL…LILC), 82–102 (ILFV…WAVI), 115–135 (VGVL…IIAG), 161–181 (MGLV…SQIV), 187–207 (MPWW…ISVL), 235–255 (MGFA…SAMT), 275–295 (IPGF…FLWI), and 311–331 (GWKV…SVLI).

This sequence belongs to the complex I subunit 1 family. In terms of assembly, NDH-1 is composed of 14 different subunits. Subunits NuoA, H, J, K, L, M, N constitute the membrane sector of the complex.

The protein localises to the cell inner membrane. It catalyses the reaction a quinone + NADH + 5 H(+)(in) = a quinol + NAD(+) + 4 H(+)(out). Its function is as follows. NDH-1 shuttles electrons from NADH, via FMN and iron-sulfur (Fe-S) centers, to quinones in the respiratory chain. The immediate electron acceptor for the enzyme in this species is believed to be ubiquinone. Couples the redox reaction to proton translocation (for every two electrons transferred, four hydrogen ions are translocated across the cytoplasmic membrane), and thus conserves the redox energy in a proton gradient. This subunit may bind ubiquinone. This is NADH-quinone oxidoreductase subunit H from Rickettsia bellii (strain OSU 85-389).